The chain runs to 237 residues: Phosphoribosylaminoimidazole-succinocarboxamide synthase (237 aa).

The protein belongs to the SAICAR synthetase family.

The enzyme catalyses 5-amino-1-(5-phospho-D-ribosyl)imidazole-4-carboxylate + L-aspartate + ATP = (2S)-2-[5-amino-1-(5-phospho-beta-D-ribosyl)imidazole-4-carboxamido]succinate + ADP + phosphate + 2 H(+). It participates in purine metabolism; IMP biosynthesis via de novo pathway; 5-amino-1-(5-phospho-D-ribosyl)imidazole-4-carboxamide from 5-amino-1-(5-phospho-D-ribosyl)imidazole-4-carboxylate: step 1/2. This chain is Phosphoribosylaminoimidazole-succinocarboxamide synthase, found in Deinococcus deserti (strain DSM 17065 / CIP 109153 / LMG 22923 / VCD115).